Consider the following 109-residue polypeptide: uncharacterized protein (109 aa).

This is an uncharacterized protein from Enterobacteria phage T4 (Bacteriophage T4).